A 241-amino-acid polypeptide reads, in one-letter code: Translation initiation factor IF-3 (241 aa).

The segment at 178–241 (KKTEAMAEAR…EAPAEASTEA (64 aa)) is disordered. Basic and acidic residues predominate over residues 180 to 197 (TEAMAEAREAQAARKAEA). A compositionally biased stretch (acidic residues) spans 208-229 (ADEDIPEGELPEGEVPEAETTE). A compositionally biased stretch (low complexity) spans 230–241 (AAEAPAEASTEA).

This sequence belongs to the IF-3 family. In terms of assembly, monomer.

The protein localises to the cytoplasm. Functionally, IF-3 binds to the 30S ribosomal subunit and shifts the equilibrium between 70S ribosomes and their 50S and 30S subunits in favor of the free subunits, thus enhancing the availability of 30S subunits on which protein synthesis initiation begins. The polypeptide is Translation initiation factor IF-3 (Streptomyces avermitilis (strain ATCC 31267 / DSM 46492 / JCM 5070 / NBRC 14893 / NCIMB 12804 / NRRL 8165 / MA-4680)).